A 155-amino-acid polypeptide reads, in one-letter code: Ribosomal RNA large subunit methyltransferase H (155 aa).

Residues leucine 72, glycine 103, and 122-127 (LSALTL) contribute to the S-adenosyl-L-methionine site.

Belongs to the RNA methyltransferase RlmH family. In terms of assembly, homodimer.

Its subcellular location is the cytoplasm. It carries out the reaction pseudouridine(1915) in 23S rRNA + S-adenosyl-L-methionine = N(3)-methylpseudouridine(1915) in 23S rRNA + S-adenosyl-L-homocysteine + H(+). In terms of biological role, specifically methylates the pseudouridine at position 1915 (m3Psi1915) in 23S rRNA. This is Ribosomal RNA large subunit methyltransferase H from Shigella boydii serotype 18 (strain CDC 3083-94 / BS512).